We begin with the raw amino-acid sequence, 638 residues long: ATP-dependent zinc metalloprotease FtsH (638 aa).

Over 1–7 (MRSTYKT) the chain is Cytoplasmic. A helical transmembrane segment spans residues 8 to 28 (IGLWVILIVLFVAFYNFFSQG). The Periplasmic portion of the chain corresponds to 29 to 102 (NDQVQEPSFT…KYEREEQNSL (74 aa)). A helical membrane pass occupies residues 103-123 (WLTILGQWMPVVFLFLFFIFF). The Cytoplasmic segment spans residues 124-638 (MRQLQGGSGK…GLPAMEPKKA (515 aa)). 195–202 (GSPGTGKT) contacts ATP. Histidine 417 lines the Zn(2+) pocket. Glutamate 418 is an active-site residue. Residues histidine 421 and aspartate 493 each coordinate Zn(2+). The interval 596–638 (GGQLTRERPPPRVNAPPKATEKKDKRKILDALEGLPAMEPKKA) is disordered. A compositionally biased stretch (basic and acidic residues) spans 614–625 (ATEKKDKRKILD).

It in the central section; belongs to the AAA ATPase family. The protein in the C-terminal section; belongs to the peptidase M41 family. In terms of assembly, homohexamer. Requires Zn(2+) as cofactor.

It localises to the cell inner membrane. Functionally, acts as a processive, ATP-dependent zinc metallopeptidase for both cytoplasmic and membrane proteins. Plays a role in the quality control of integral membrane proteins. In Myxococcus xanthus (strain DK1622), this protein is ATP-dependent zinc metalloprotease FtsH.